The sequence spans 85 residues: Large ribosomal subunit protein bL27 (85 aa).

The segment at 1-20 is disordered; it reads MAHKKAGGSTRNGRDSEAKR.

This sequence belongs to the bacterial ribosomal protein bL27 family.

This chain is Large ribosomal subunit protein bL27, found in Enterobacter sp. (strain 638).